The following is a 186-amino-acid chain: Guanylate kinase (186 aa).

The Guanylate kinase-like domain maps to 5–183 (GNLTVLTGPS…AFKEIEGFMG (179 aa)). 12–19 (GPSGVGKG) provides a ligand contact to ATP.

Belongs to the guanylate kinase family.

It is found in the cytoplasm. The enzyme catalyses GMP + ATP = GDP + ADP. Functionally, essential for recycling GMP and indirectly, cGMP. The protein is Guanylate kinase of Prochlorococcus marinus (strain NATL2A).